The sequence spans 264 residues: Synaptophysin-like protein 2 (264 aa).

At Met-1–Glu-33 the chain is on the cytoplasmic side. Positions Arg-30–Pro-238 constitute an MARVEL domain. The helical transmembrane segment at Pro-34 to Gly-54 threads the bilayer. Topologically, residues Ser-55–Glu-116 are vesicular. Residues Phe-117–Leu-137 form a helical membrane-spanning segment. The Cytoplasmic portion of the chain corresponds to Arg-138 to Pro-150. The chain crosses the membrane as a helical span at residues Leu-151–Trp-171. Over Gly-172 to Asn-213 the chain is Vesicular. Asn-213 is a glycosylation site (N-linked (GlcNAc...) asparagine). Residues Ile-214–Phe-234 form a helical membrane-spanning segment. Residues Lys-235 to Gln-264 lie on the Cytoplasmic side of the membrane. Residues Gln-242–Gln-264 form a disordered region.

It belongs to the synaptophysin/synaptobrevin family. In terms of tissue distribution, skeletal muscle.

It is found in the membrane. Involved in communication between the T-tubular and junctional sarcoplasmic reticulum (SR) membranes. The sequence is that of Synaptophysin-like protein 2 (SYPL2) from Oryctolagus cuniculus (Rabbit).